The primary structure comprises 363 residues: Adenosine deaminase (363 aa).

Zn(2+)-binding residues include H42 and H44. A purine D-ribonucleoside contacts are provided by residues 44–46 (HLD), D172, and G201. A gating helix loop; regulates binding affinity for substrates and thus substrate selectivity region spans residues 170–184 (IGDTGHEAANIKASA). Position 226 (H226) interacts with Zn(2+). 3 residues coordinate a purine D-ribonucleoside: E229, H253, and D310. D310 contributes to the Zn(2+) binding site.

The protein belongs to the metallo-dependent hydrolases superfamily. Adenosine and AMP deaminases family. Zn(2+) is required as a cofactor.

The enzyme catalyses adenosine + H2O + H(+) = inosine + NH4(+). It catalyses the reaction S-methyl-5'-thioadenosine + H2O + H(+) = S-methyl-5'-thioinosine + NH4(+). It participates in purine metabolism; purine nucleoside salvage. Inhibited by coformycin and methylthiocoformycin (MT-coformycin). Functionally, catalyzes the hydrolytic deamination of adenosine to produce inosine. Unlike mammalian adenosine deaminases, also catalyzes the deamination of 5'-methylthioadenosine (MTA), a by-product of polyamine biosynthesis, to produce 5'-methylthioinosine (MTI). Plays an essential role in the purine salvage pathway which allows the parasite to use host cell purines for the synthesis of nucleic acids. The chain is Adenosine deaminase from Plasmodium cynomolgi (strain B).